Here is a 113-residue protein sequence, read N- to C-terminus: uncharacterized protein (113 aa).

It belongs to the HesB/IscA family.

This is an uncharacterized protein from Synechocystis sp. (strain ATCC 27184 / PCC 6803 / Kazusa).